Here is a 264-residue protein sequence, read N- to C-terminus: Proteasome assembly chaperone 2 (264 aa).

Residue Thr-137 is modified to Phosphothreonine.

The protein belongs to the PSMG2 family. Forms a heterodimer with PSMG1. The PSMG1-PSMG2 heterodimer interacts directly with the PSMA5 and PSMA7 proteasome alpha subunits. Degraded by the proteasome upon completion of 20S proteasome maturation.

The protein resides in the nucleus. In terms of biological role, chaperone protein which promotes assembly of the 20S proteasome as part of a heterodimer with PSMG1. The PSMG1-PSMG2 heterodimer binds to the PSMA5 and PSMA7 proteasome subunits, promotes assembly of the proteasome alpha subunits into the heteroheptameric alpha ring and prevents alpha ring dimerization. This is Proteasome assembly chaperone 2 from Mus musculus (Mouse).